Reading from the N-terminus, the 89-residue chain is Large ribosomal subunit protein bL27 (89 aa).

The tract at residues 1–26 (MAQKKAGGSSRNGRDSVGQRRGVKRF) is disordered.

The protein belongs to the bacterial ribosomal protein bL27 family.

The polypeptide is Large ribosomal subunit protein bL27 (Desulfovibrio desulfuricans (strain ATCC 27774 / DSM 6949 / MB)).